Consider the following 33-residue polypeptide: uncharacterized protein (33 aa).

Residues 1 to 24 (MRTGTRCDLGELSHPRKTLPPRGM) are disordered.

This is an uncharacterized protein from Treponema pallidum (strain Nichols).